Here is a 329-residue protein sequence, read N- to C-terminus: Helicase VP6-A (329 aa).

Disordered regions lie at residues 28-130 (NLVD…TNGG) and 189-232 (DLRR…SEEP). Basic and acidic residues-rich tracts occupy residues 36–58 (EGGKEDKTEPKEESKAEGSKDGE), 65–83 (GQKEEGGKETKDADVDRRI), and 96–109 (SGERANENANRGDG). Lys-110 contributes to the ATP binding site. Residues 110–129 (KVGGGGGDADAGVGATGTNG) are compositionally biased toward gly residues. Basic and acidic residues-rich tracts occupy residues 189–207 (DLRRKEKNGTHAKAVERGG) and 215–232 (HGDAQREGVEEEKTSEEP).

This sequence belongs to the reoviruses VP6 family. Homohexamer.

The protein resides in the virion. It carries out the reaction ATP + H2O = ADP + phosphate + H(+). Functionally, ATP dependent RNA helicase essential for RNA packaging and viral transcription. Possesses ss- and dsRNA-binding capacity. This chain is Helicase VP6-A (Segment-9), found in Bluetongue virus 10 (isolate USA) (BTV 10).